The sequence spans 166 residues: MLPAYLPNNFAALTGGGMPIDMGRNWTDGRRILGDGKTIRGFVGGVTAGILIGAVQMYAEISGLVPWFPPHTLTAVILLAIGSLLGDMVKSFFKRRQGIDRGGEWFLVDQLDFVVGALLLTLLFDPIWMLNTMTIPLLIVILVLTPLLHRTVNIIGYKLGLKKVPW.

Helical transmembrane passes span 39–59, 61–81, 104–124, and 127–147; these read IRGF…QMYA, ISGL…LLAI, EWFL…TLLF, and IWML…LTPL.

The protein belongs to the CDP-archaeol synthase family. Requires Mg(2+) as cofactor.

It is found in the cell membrane. The enzyme catalyses 2,3-bis-O-(geranylgeranyl)-sn-glycerol 1-phosphate + CTP + H(+) = CDP-2,3-bis-O-(geranylgeranyl)-sn-glycerol + diphosphate. Its pathway is membrane lipid metabolism; glycerophospholipid metabolism. Functionally, catalyzes the formation of CDP-2,3-bis-(O-geranylgeranyl)-sn-glycerol (CDP-archaeol) from 2,3-bis-(O-geranylgeranyl)-sn-glycerol 1-phosphate (DGGGP) and CTP. This reaction is the third ether-bond-formation step in the biosynthesis of archaeal membrane lipids. The sequence is that of CDP-archaeol synthase from Methanospirillum hungatei JF-1 (strain ATCC 27890 / DSM 864 / NBRC 100397 / JF-1).